The chain runs to 197 residues: Ribonuclease HII (197 aa).

One can recognise an RNase H type-2 domain in the interval 14-197; that stretch reads EKIVGIDEAG…RSFNLGVNDD (184 aa). Residues aspartate 20, glutamate 21, and aspartate 112 each contribute to the a divalent metal cation site.

It belongs to the RNase HII family. It depends on Mn(2+) as a cofactor. The cofactor is Mg(2+).

The protein localises to the cytoplasm. The catalysed reaction is Endonucleolytic cleavage to 5'-phosphomonoester.. Functionally, endonuclease that specifically degrades the RNA of RNA-DNA hybrids. The polypeptide is Ribonuclease HII (Sulfurihydrogenibium sp. (strain YO3AOP1)).